We begin with the raw amino-acid sequence, 184 residues long: Adenine phosphoribosyltransferase (184 aa).

Belongs to the purine/pyrimidine phosphoribosyltransferase family. As to quaternary structure, homodimer.

The protein resides in the cytoplasm. The catalysed reaction is AMP + diphosphate = 5-phospho-alpha-D-ribose 1-diphosphate + adenine. It participates in purine metabolism; AMP biosynthesis via salvage pathway; AMP from adenine: step 1/1. Functionally, catalyzes a salvage reaction resulting in the formation of AMP, that is energically less costly than de novo synthesis. This Blochmanniella pennsylvanica (strain BPEN) protein is Adenine phosphoribosyltransferase.